A 110-amino-acid polypeptide reads, in one-letter code: U1-lycotoxin-Ls1cc (110 aa).

The N-terminal stretch at 1–20 is a signal peptide; it reads MKFVLLFGVLLVTLFSYSSA. Positions 21–44 are excised as a propeptide; sequence EMLDDFDQADEDELLSLIEKEEAR. 4 disulfides stabilise this stretch: Cys-47/Cys-62, Cys-54/Cys-71, Cys-61/Cys-89, and Cys-73/Cys-87.

Belongs to the neurotoxin 19 (CSTX) family. 03 subfamily. In terms of tissue distribution, expressed by the venom gland.

It localises to the secreted. In Lycosa singoriensis (Wolf spider), this protein is U1-lycotoxin-Ls1cc.